Here is a 110-residue protein sequence, read N- to C-terminus: UPF0122 protein Sca_0859 (110 aa).

This sequence belongs to the UPF0122 family.

Its function is as follows. Might take part in the signal recognition particle (SRP) pathway. This is inferred from the conservation of its genetic proximity to ftsY/ffh. May be a regulatory protein. This Staphylococcus carnosus (strain TM300) protein is UPF0122 protein Sca_0859.